An 807-amino-acid polypeptide reads, in one-letter code: MYSEGKLLKVFLIFAGFIIFSLCGEVVSQRYPPAPGLLKYLEQDVCYSLYYYLNWTSLADCKTNFEETGISDVPSTVKVRCQSKNSIRFETEPSEHWQLFILMEHDNFDPIPFTLIEPNNVFGELITTANKEYQIWSTYLDEYGTLQDWMEGPIVLKFDQRNQQPDDIKYNVTQEFKYIILGNDSYTINGKFVWNTTGDRDLCFDIANICQNTNMKHAKIWPTAHPSFDVENLVLNDECEIHVKGIHGTTKHKYKTPSCFELPECFLNNMEPEIPQDVAIAADQDLRGWWNINVAWAKPHFQPEIYNVTVRANMIRSIILPGNATETTFRNIPNTFLSAGKIYNVSVYAIIGQKASHTSRRAFTPGMLRWVWAGATAGAGCAAGGLLAATLLCCGHRRATSRVSQEDPDEKTPKEDDVEIIGIESGSADDHWEVRSDRVLLHEVIGEGAFGVVRRGTLAPGGKSVAVKMLKEFPSQEEVRSFRSEMELMKSVGAHPHVVSLVGCCSGRKPLIVAEYCSRGDLLSYLRSSWDIIVSKHTAKYYNNNMDSMDTSKLKVHKEHTKLVVNKLYELQGPCETELTPLDLLSFCRQIAMGMEFLASNRIVHRDLAARNVLVTEDKTLKIADFGLSRDIYEENQYKQKGNGKMPVKWMALESLTRRVYTTQSDVWSFGVVIWEIVTVGGSPYPEVPAARLVRSLRSGYRMPKPVNCSKPLYDIMRACWNASPRDRPTFPELHQKLDDLLHSACANEYITLEVDVDEAPSTPKPQRYIKMLIRGKLPWSRESYERPVNPTSNLYSSPPVIQTKTA.

Positions 1–28 (MYSEGKLLKVFLIFAGFIIFSLCGEVVS) are cleaved as a signal peptide. The Extracellular segment spans residues 29–370 (QRYPPAPGLL…RAFTPGMLRW (342 aa)). 4 cysteine pairs are disulfide-bonded: C46-C61, C81-C203, C210-C239, and C259-C265. N-linked (GlcNAc...) asparagine glycosylation is found at N54, N171, N183, and N195. N307, N323, and N344 each carry an N-linked (GlcNAc...) asparagine glycan. Residues 371–391 (VWAGATAGAGCAAGGLLAATL) traverse the membrane as a helical segment. Residues 392–807 (LCCGHRRATS…SPPVIQTKTA (416 aa)) lie on the Cytoplasmic side of the membrane. Positions 439-738 (VLLHEVIGEG…PTFPELHQKL (300 aa)) constitute a Protein kinase domain. Residues 445-453 (IGEGAFGVV) and K468 each bind ATP. D607 acts as the Proton acceptor in catalysis.

The protein belongs to the protein kinase superfamily. Tyr protein kinase family. As to quaternary structure, homodimer; disulfide-linked. Mg(2+) is required as a cofactor. May be auto-phosphorylated on tyrosine residues. In terms of processing, at least one of the 3 cysteine residues Cys-381, Cys-393 or Cys-394 is involved in the formation of interchain disulfide bonds. The disulfide bond sites in the extracellular region are not involved in homodimer formation.

The protein resides in the cell membrane. The enzyme catalyses L-tyrosyl-[protein] + ATP = O-phospho-L-tyrosyl-[protein] + ADP + H(+). Its function is as follows. Probable receptor tyrosine kinase. During postembryonic development, involved in the initiation of metamorphosis probably by inducing the production of ecdysone in response to prothoracicotropic hormone (PTTH). Binding to PTTH stimulates activation of canonical MAPK signaling leading to ERK phosphorylation. The polypeptide is Tyrosine-protein kinase receptor torso (Bombyx mori (Silk moth)).